A 344-amino-acid chain; its full sequence is Cell division protein ZipA (344 aa).

The Periplasmic portion of the chain corresponds to 1 to 6 (MEDLQL). Residues 7 to 27 (VLFVLGAIAIVAVLVHGFWSI) traverse the membrane as a helical segment. The Cytoplasmic segment spans residues 28–344 (RRQQPKSLKD…DYLHRIRANA (317 aa)). Disordered stretches follow at residues 75 to 94 (VRKA…PYLK) and 108 to 139 (QFKQ…ASRQ).

The protein belongs to the ZipA family. In terms of assembly, interacts with FtsZ via their C-terminal domains.

It localises to the cell inner membrane. In terms of biological role, essential cell division protein that stabilizes the FtsZ protofilaments by cross-linking them and that serves as a cytoplasmic membrane anchor for the Z ring. Also required for the recruitment to the septal ring of downstream cell division proteins. The protein is Cell division protein ZipA of Shewanella oneidensis (strain ATCC 700550 / JCM 31522 / CIP 106686 / LMG 19005 / NCIMB 14063 / MR-1).